We begin with the raw amino-acid sequence, 283 residues long: Non-selective voltage-gated ion channel VDAC1 (283 aa).

Alanine 2 carries the post-translational modification N-acetylalanine. Lysine 12 provides a ligand contact to ATP. Lysine 12 participates in a covalent cross-link: Glycyl lysine isopeptide (Lys-Gly) (interchain with G-Cter in ubiquitin). Serine 13 carries the phosphoserine modification. Threonine 19 is subject to Phosphothreonine. Residue lysine 20 coordinates ATP. Lysine 20 carries the post-translational modification N6-acetyllysine; alternate. N6-succinyllysine; alternate is present on lysine 20. Lysine 20 participates in a covalent cross-link: Glycyl lysine isopeptide (Lys-Gly) (interchain with G-Cter in ubiquitin); alternate. The next 2 membrane-spanning stretches (beta stranded) occupy residues 26 to 35 (LIKLDLKTKS) and 39 to 47 (LEFTSSGSA). Residues lysine 53 and lysine 61 each participate in a glycyl lysine isopeptide (Lys-Gly) (interchain with G-Cter in ubiquitin) cross-link. The chain crosses the membrane as a beta stranded span at residues 54-64 (VNGSLETKYRW). Tyrosine 67 bears the Phosphotyrosine mark. Transmembrane regions (beta stranded) follow at residues 69–76 (LTFTEKWN), 80–89 (TLGTEITVED), and 95–104 (LKLTFDSSFS). Position 107 is a phosphothreonine (threonine 107). Residue lysine 109 is modified to N6-acetyllysine; alternate. Lysine 109 is covalently cross-linked (Glycyl lysine isopeptide (Lys-Gly) (interchain with G-Cter in ubiquitin); alternate). Lysine 110 is covalently cross-linked (Glycyl lysine isopeptide (Lys-Gly) (interchain with G-Cter in ubiquitin)). A run of 4 beta stranded transmembrane segments spans residues 111-120 (NAKIKTGYKR), 123-130 (INLGCDVD), 137-145 (SIRGALVLG), and 150-158 (LAGYQMNFE). Serine 137 is subject to Phosphoserine. A Glycyl lysine isopeptide (Lys-Gly) (interchain with G-Cter in ubiquitin) cross-link involves residue lysine 161. Transmembrane regions (beta stranded) follow at residues 163 to 175 (RVTQ…GYKT), 178 to 185 (FQLHTNVN), 189 to 198 (EFGGSIYQKV), 202 to 211 (LETAVNLAWT), 218 to 227 (RFGIAAKYQV), and 231 to 238 (ACFSAKVN). Position 193 is a phosphoserine; by NEK1 (serine 193). The residue at position 240 (serine 240) is a Phosphoserine. Residue 242–244 (LIG) coordinates NAD(+). Residues 242–251 (LIGLGYTQTL) traverse the membrane as a beta stranded segment. Lysine 252 is modified (N6-acetyllysine). The beta stranded transmembrane segment at 254-263 (GIKLTLSALL) threads the bilayer. 260–264 (SALLD) provides a ligand contact to NAD(+). Lysine 266 carries the N6-acetyllysine; alternate modification. A Glycyl lysine isopeptide (Lys-Gly) (interchain with G-Cter in ubiquitin); alternate cross-link involves residue lysine 266. A beta stranded transmembrane segment spans residues 273–282 (HKLGLGLEFQ). Residue lysine 274 forms a Glycyl lysine isopeptide (Lys-Gly) (interchain with G-Cter in ubiquitin) linkage.

Belongs to the eukaryotic mitochondrial porin family. As to quaternary structure, homodimer and homotrimer; in response to cyclic AMP or calcium; oligomerization is required for scramblase activity. Component of the mitochondrial permeability transition pore complex (mPTPC), at least composed of SPG7, VDAC1 and PPIF. Interacts with SPG7, NIPSNAP2 and SLC25A30. Interacts with hexokinases including HK1. The HK1-VDAC1 complex interacts with ATF2. Interacts with BCL2L1. Interacts with BAK1. Interacts with RTL10/BOP (via BH3 domain). Interacts with amyloid-beta and APP; induces VDAC1 dephosphorylation. Interacts with TMEM41B. Interacts with BCAP31. Interacts with HSPA9; this interaction couples ITPR1 to VDAC1. Phosphorylation at Ser-193 by NEK1 promotes the closed conformational state preventing excessive mitochondrial membrane permeability and subsequent apoptotic cell death after injury. Phosphorylation by the AKT-GSK3B axis stabilizes the protein probably by preventing ubiquitin-mediated proteasomal degradation. In terms of processing, ubiquitinated. Undergoes monoubiquitination and polyubiquitination by PRKN; monoubiquitination at Lys-274 inhibits apoptosis, whereas polyubiquitination leads to its degradation and promotes mitophagy. Deubiquitinated by USP30. In terms of tissue distribution, widely expressed. High levels in heart and kidney with lower levels in brain and ascitic tumor. Very low levels in liver.

It is found in the mitochondrion outer membrane. The protein localises to the cell membrane. Its subcellular location is the membrane raft. It carries out the reaction Ca(2+)(in) = Ca(2+)(out). The enzyme catalyses Na(+)(in) = Na(+)(out). It catalyses the reaction chloride(in) = chloride(out). The catalysed reaction is Mg(2+)(in) = Mg(2+)(out). It carries out the reaction K(+)(in) = K(+)(out). The enzyme catalyses ATP(in) = ATP(out). It catalyses the reaction L-glutamate(out) = L-glutamate(in). The catalysed reaction is dopamine(out) = dopamine(in). It carries out the reaction acetylcholine(in) = acetylcholine(out). The enzyme catalyses Fe(III)-[cytochrome c](out) = Fe(III)-[cytochrome c](in). It catalyses the reaction a 1,2-diacyl-sn-glycero-3-phosphocholine(in) = a 1,2-diacyl-sn-glycero-3-phosphocholine(out). The catalysed reaction is a 1,2-diacyl-sn-glycero-3-phospho-L-serine(in) = a 1,2-diacyl-sn-glycero-3-phospho-L-serine(out). With respect to regulation, inhibited by nitric oxide. Voltage-gated ion channel activity is inhibited by lanthanum(3+) and ruthenium red. Mitochondrial calcium transport is inhibited by lanthanum(3+), ruthenium red and Ru360. Functionally, non-selective voltage-gated ion channel that mediates the transport of anions and cations through the mitochondrion outer membrane and plasma membrane. The channel at the outer mitochondrial membrane allows diffusion of small hydrophilic molecules; in the plasma membrane it is involved in cell volume regulation and apoptosis. It adopts an open conformation at low or zero membrane potential and a closed conformation at potentials above 30-40 mV. The open state has a weak anion selectivity whereas the closed state is cation-selective. Binds various signaling molecules, including the sphingolipid ceramide, the phospholipid phosphatidylcholine, and the sterols cholesterol and oxysterol. In depolarized mitochondria, acts downstream of PRKN and PINK1 to promote mitophagy or prevent apoptosis; polyubiquitination by PRKN promotes mitophagy, while monoubiquitination by PRKN decreases mitochondrial calcium influx which ultimately inhibits apoptosis. May participate in the formation of the permeability transition pore complex (PTPC) responsible for the release of mitochondrial products that triggers apoptosis. May mediate ATP export from cells. Part of a complex composed of HSPA9, ITPR1 and VDAC1 that regulates mitochondrial calcium-dependent apoptosis by facilitating calcium transport from the ER lumen to the mitochondria intermembrane space thus providing calcium for the downstream calcium channel MCU that directly releases it into mitochondria matrix. Its function is as follows. Catalyzes the scrambling of phospholipids across the outer mitochondrial membrane; the mechanism is unrelated to channel activity and is capable of translocating both anionic and zwitterionic phospholipids. The sequence is that of Non-selective voltage-gated ion channel VDAC1 from Rattus norvegicus (Rat).